Here is a 198-residue protein sequence, read N- to C-terminus: Recombination protein RecR (198 aa).

The C4-type zinc-finger motif lies at Cys57–Cys72. Positions Ser80–Ala175 constitute a Toprim domain.

This sequence belongs to the RecR family.

Its function is as follows. May play a role in DNA repair. It seems to be involved in an RecBC-independent recombinational process of DNA repair. It may act with RecF and RecO. This is Recombination protein RecR from Streptococcus agalactiae serotype Ia (strain ATCC 27591 / A909 / CDC SS700).